Here is a 289-residue protein sequence, read N- to C-terminus: Oxaloacetate decarboxylase (289 aa).

A substrate-binding site is contributed by S47. D85 contributes to the Mg(2+) binding site. 2 residues coordinate substrate: R156 and H232.

This sequence belongs to the isocitrate lyase/PEP mutase superfamily. Oxaloacetate decarboxylase family. As to quaternary structure, homotetramer; dimer of dimers. Mg(2+) serves as cofactor.

The catalysed reaction is oxaloacetate + H(+) = pyruvate + CO2. Catalyzes the decarboxylation of oxaloacetate into pyruvate. Seems to play a role in maintaining cellular concentrations of bicarbonate and pyruvate. This is Oxaloacetate decarboxylase from Rhodopseudomonas palustris (strain BisB5).